The primary structure comprises 508 residues: UTP--glucose-1-phosphate uridylyltransferase (508 aa).

S2 is subject to N-acetylserine. Phosphoserine occurs at positions 2 and 13. UTP is bound by residues 113-116 (LNGG), K127, Q190, and G222. 115 to 116 (GG) contacts substrate. K127 contacts Mg(2+). Substrate-binding positions include H223, 251 to 253 (NID), and N330. Position 253 (D253) interacts with UTP. D253 provides a ligand contact to Mg(2+). Position 396 (K396) interacts with UTP. K396 is a catalytic residue. Residue T426 is modified to Phosphothreonine. Residue S434 is modified to Phosphoserine. K438 is modified (N6-acetyllysine). S448 and S461 each carry phosphoserine. The oligomerization stretch occupies residues 457 to 508 (HLTVSGDVTFGKNVSLKGTVIIIANHGDRIDIPPGAVLENKIVSGNLRILDH). Residues 502-503 (NL) are critical for end-to-end subunit interaction.

It belongs to the UDPGP type 1 family. In terms of assembly, homooctamer. In terms of tissue distribution, highly expressed in various brain regions. Expressed in amygdala, anterior cingulate cortex, caudate, cerebellar hemisphere, cerebellum, cortex, frontal cortex, hippocampus, hypothalamus, nucleus accumbens, putamen, spinal cord and substantia nigra. Also widely expressed among other tissues, including liver, heart, placenta, lung, kidney, pancreas and skeletal muscle.

It is found in the cytoplasm. It catalyses the reaction alpha-D-glucose 1-phosphate + UTP + H(+) = UDP-alpha-D-glucose + diphosphate. Its pathway is glycan biosynthesis; glycogen biosynthesis. Its function is as follows. UTP--glucose-1-phosphate uridylyltransferase catalyzing the conversion of glucose-1-phosphate into UDP-glucose, a crucial precursor for the production of glycogen. This Homo sapiens (Human) protein is UTP--glucose-1-phosphate uridylyltransferase.